The chain runs to 198 residues: UPF0312 protein PFL_5802 (198 aa).

Positions 1–23 (MLKKTLAALAIGSAVLAAGQVMA) are cleaved as a signal peptide.

This sequence belongs to the UPF0312 family. Type 1 subfamily.

Its subcellular location is the periplasm. The protein is UPF0312 protein PFL_5802 of Pseudomonas fluorescens (strain ATCC BAA-477 / NRRL B-23932 / Pf-5).